We begin with the raw amino-acid sequence, 260 residues long: RNA polymerase sigma-G factor (260 aa).

The segment at 1–71 (MSRNKVEICG…GEYVDDLFQV (71 aa)) is recognizes anti-sigma-G factor Gin (csfB). The Polymerase core binding motif lies at 67–80 (DLFQVGCIGLMKSI). A DNA-binding region (H-T-H motif) is located at residues 229 to 248 (QMEVAEEIGISQAQVSRLEK).

The protein belongs to the sigma-70 factor family. Interacts with anti-sigma-G factor Gin (csfB).

Activity repressed by anti-sigma-G factor Gin (csfB) and Lon protease during the early stages of forespore development. When both Gin and sigma-G are expressed in E.coli Gin inhibits sigma-G activity, strongly suggesting Gin inhibits by direct physical interaction. Functionally, sigma factors are initiation factors that promote the attachment of RNA polymerase to specific initiation sites and are then released. This sigma factor is responsible for the expression of sporulation specific genes in the forespore. The chain is RNA polymerase sigma-G factor (sigG) from Bacillus subtilis (strain 168).